The following is a 136-amino-acid chain: NADPH-dependent 7-cyano-7-deazaguanine reductase (136 aa).

The active-site Thioimide intermediate is the C50. The Proton donor role is filled by D57. Substrate is bound by residues Y72–L74 and H91–E92.

This sequence belongs to the GTP cyclohydrolase I family. QueF type 1 subfamily.

The protein resides in the cytoplasm. The enzyme catalyses 7-aminomethyl-7-carbaguanine + 2 NADP(+) = 7-cyano-7-deazaguanine + 2 NADPH + 3 H(+). Its pathway is tRNA modification; tRNA-queuosine biosynthesis. Catalyzes the NADPH-dependent reduction of 7-cyano-7-deazaguanine (preQ0) to 7-aminomethyl-7-deazaguanine (preQ1). This Prochlorococcus marinus (strain MIT 9312) protein is NADPH-dependent 7-cyano-7-deazaguanine reductase.